The primary structure comprises 426 residues: D-ribulose kinase (426 aa).

Substrate is bound by residues Asp-8, 12–15 (SGAR), Ser-72, and Asp-221. Residues Ser-243, Gly-281, and 376-380 (GGAKN) contribute to the ATP site.

The protein belongs to the FGGY kinase family. It depends on a divalent metal cation as a cofactor.

The enzyme catalyses D-ribulose + ATP = D-ribulose 5-phosphate + ADP + H(+). Exhibits ATP hydrolysis without substrate. Phosphorylates D-ribulose. The sequence is that of D-ribulose kinase from Synechococcus elongatus (strain ATCC 33912 / PCC 7942 / FACHB-805) (Anacystis nidulans R2).